A 944-amino-acid chain; its full sequence is Protocadherin gamma-C5 (944 aa).

The signal sequence occupies residues 1–29 (MGPKTLPQLAGKWQVLCMLSLCCWGWVSG). 6 consecutive Cadherin domains span residues 30–133 (QLRY…SPSF), 134–242 (ATPE…APTF), 243–350 (QSSV…APEV), 351–454 (LLAS…APRF), 455–564 (NQQL…APAV), and 571–677 (WEHS…MPKS). Topologically, residues 30 to 693 (QLRYSVVEES…PPERSDLTLY (664 aa)) are extracellular. N-linked (GlcNAc...) asparagine glycosylation is found at Asn-265, Asn-443, and Asn-547. A helical membrane pass occupies residues 694 to 714 (LIVALATVSLLSLVTFTFLSA). Over 715-944 (KCLQGNADGD…KKKSGKKEKK (230 aa)) the chain is Cytoplasmic. 3 disordered regions span residues 722–747 (DGDGGGGQCCRRQDSPSPDFYKQSSP), 812–853 (SNTL…WPNN), and 914–944 (ATLTNAAGKRDGKAPAGGNGNKKKSGKKEKK). The span at 820 to 853 (QQAPPNTDWRFSQAQRPGTSGSQNGDDTGTWPNN) shows a compositional bias: polar residues. The span at 934-944 (NKKKSGKKEKK) shows a compositional bias: basic residues.

The protein localises to the cell membrane. In terms of biological role, potential calcium-dependent cell-adhesion protein. May be involved in the establishment and maintenance of specific neuronal connections in the brain. In Pan troglodytes (Chimpanzee), this protein is Protocadherin gamma-C5 (PCDHGC5).